The sequence spans 341 residues: Major histocompatibility complex class I-related protein 1 (341 aa).

Positions 1–18 (MMLLLPLLAVFLVKRSHT) are cleaved as a signal peptide. An alpha-1 region spans residues 19 to 105 (RTHSLRYFRL…RHLQRHYNHS (87 aa)). The antigen-binding cleft stretch occupies residues 19-197 (RTHSLRYFRL…EYGRDTLERT (179 aa)). The Extracellular segment spans residues 19 to 296 (RTHSLRYFRL…APRESGDILR (278 aa)). 8-(9H-purin-6-yl)-2-oxa-8-azabicyclo[3.3.1]nona-3,6-diene-4,6-dicarbaldehyde contacts are provided by Tyr25 and Arg27. 3 residues coordinate 5-(2-oxoethylideneamino)-6-(D-ribitylamino)uracil: Arg27, Ser42, and Lys61. Residues Arg27, Ser42, and Lys61 each contribute to the 5-(2-oxopropylideneamino)-6-(D-ribitylamino)uracil site. Positions 27, 42, and 61 each coordinate 7-hydroxy-6-methyl-8-(1-D-ribityl)lumazine. 8-(9H-purin-6-yl)-2-oxa-8-azabicyclo[3.3.1]nona-3,6-diene-4,6-dicarbaldehyde-binding residues include Lys61 and His76. Position 61 (Lys61) interacts with 2-amino-4-oxopteridine-6-carbaldehyde. Position 61 (Lys61) interacts with pyridoxal. Residue Asn103 is glycosylated (N-linked (GlcNAc...) asparagine). The tract at residues 106-197 (GLHTYQRMIG…EYGRDTLERT (92 aa)) is alpha-2. Residue Arg112 coordinates 8-(9H-purin-6-yl)-2-oxa-8-azabicyclo[3.3.1]nona-3,6-diene-4,6-dicarbaldehyde. Arg112, Tyr170, and Gln171 together coordinate 5-(2-oxoethylideneamino)-6-(D-ribitylamino)uracil. 3 residues coordinate 5-(2-oxopropylideneamino)-6-(D-ribitylamino)uracil: Arg112, Tyr170, and Gln171. Arg112, Tyr170, and Gln171 together coordinate 7-hydroxy-6-methyl-8-(1-D-ribityl)lumazine. 2 cysteine pairs are disulfide-bonded: Cys116–Cys179 and Cys218–Cys274. An alpha-3 region spans residues 198–289 (EHPVVRTTRK…GRQMVLEAPR (92 aa)). In terms of domain architecture, Ig-like C1-type spans 200–301 (PVVRTTRKET…GDILRVSTIS (102 aa)). The connecting peptide stretch occupies residues 290–296 (ESGDILR). Residues 297–317 (VSTISGTTILIIALAGVGVLI) traverse the membrane as a helical segment. Residues 318 to 341 (WRRSQELKEVMYQPTQVNEGSSPS) lie on the Cytoplasmic side of the membrane.

It belongs to the MHC class I family. As to quaternary structure, heterotrimer that consists of MR1, B2M and metabolite antigen. Major classes of metabolite ligands presented by MR1 include riboflavin-related antigens, pyrimidines and ribityl lumazines, nucleobase adducts and folate derivatives. Forms reversible covalent Schiff base complexes with microbial pyrimidine-based metabolite, which serves as a molecular switch triggering complete folding, stable association with B2M and translocation of the ternary complex from endoplasmic reticulum to the plasma membrane. Alternatively, forms non-Schiff base complexes with ribityl lumazines. On antigen-presenting cells, the ternary complex interacts with TCR on MR1-restricted CD4- or CD8-positive T cell subsets. Interacts with TAPBP and TAPBPL chaperones in the endoplasmic reticulum. TAPBP associated or not with MHC class I peptide loading complex binds ligand-free MR1 or MR1-B2M complex, providing for stable MR1 pools ready for metabolite antigen processing. TAPBPL interacts with MR1 in a ligand-independent way; this interaction may stabilize MR1 pool and facilitate ligand loading and dissociation. Structurally, MR1-B2M heterodimer adopts a topology similar to classical MHC class I molecules, with alpha-1 and alpha-2 domains of MR1 forming the antigen-binding cleft composed of two alpha-helices resting on a floor of 7-stranded anti-parallel beta-pleated sheet. N-glycosylated. In terms of tissue distribution, highly expressed thymus. Expressed in liver, kidney, spleen, heart, brain, lung, skeletal muscle and testis.

The protein localises to the cell membrane. It localises to the endoplasmic reticulum membrane. The protein resides in the golgi apparatus membrane. It is found in the early endosome membrane. Its subcellular location is the late endosome membrane. Its function is as follows. Antigen-presenting molecule specialized in displaying microbial pyrimidine-based metabolites to alpha-beta T cell receptors (TCR) on innate-type mucosal-associated invariant T (MAIT) cells. In complex with B2M preferentially presents riboflavin-derived metabolites to semi-invariant TRAV1 TCRs on MAIT cells, guiding immune surveillance of the microbial metabolome at mucosal epithelial barriers. Signature pyrimidine-based microbial antigens are generated via non-enzymatic condensation of metabolite intermediates of the riboflavin pathway with by-products arising from other metabolic pathways such as glycolysis. Typical potent antigenic metabolites are 5-(2-oxoethylideneamino)-6-D-ribitylaminouracil (5-OE-RU) and 5-(2-oxopropylideneamino)-6-D-ribitylaminouracil (5-OP-RU), products of condensation of 5-amino-6-D-ribityaminouracil (5-A-RU) with glyoxal or methylglyoxal by-products, respectively. May present microbial antigens to various TRAV1-negative MAIT cell subsets, providing for unique recognition of diverse microbes, including pathogens that do not synthesize riboflavin. Upon antigen recognition, elicits rapid innate-type MAIT cell activation to eliminate pathogenic microbes by directly killing infected cells. During T cell development, drives thymic selection and post-thymic terminal differentiation of MAIT cells in a process dependent on commensal microflora. Acts as an immune sensor of cancer cell metabolome. May present a tumor-specific or -associated metabolite essential for cancer cell survival to a pan-cancer TCR on a non-MAIT CD8-positive T cell clone, triggering T cell-mediated killing of a wide range of cancer cell types. May present tumor-enriched pyridoxal and pyridoxal 5'-phosphate antigens, enabling preferential recognition of cancer cells. Presents nucleobase carbonyl adducts generated during oxidative stress. Captures M3Ade, a nucleobase adduct composed of one adenine modified by a malondialdehyde trimer, for recognition by MR1-restricted T cell clones expressing a polyclonal TCR repertoire. This chain is Major histocompatibility complex class I-related protein 1, found in Mus musculus (Mouse).